Reading from the N-terminus, the 241-residue chain is Phosphoadenosine 5'-phosphosulfate reductase (241 aa).

The active-site Nucleophile; cysteine thiosulfonate intermediate is cysteine 235.

Belongs to the PAPS reductase family. CysH subfamily.

Its subcellular location is the cytoplasm. The catalysed reaction is [thioredoxin]-disulfide + sulfite + adenosine 3',5'-bisphosphate + 2 H(+) = [thioredoxin]-dithiol + 3'-phosphoadenylyl sulfate. It participates in sulfur metabolism; hydrogen sulfide biosynthesis; sulfite from sulfate: step 3/3. In terms of biological role, catalyzes the formation of sulfite from phosphoadenosine 5'-phosphosulfate (PAPS) using thioredoxin as an electron donor. The sequence is that of Phosphoadenosine 5'-phosphosulfate reductase from Xanthomonas oryzae pv. oryzae (strain MAFF 311018).